Consider the following 242-residue polypeptide: Ribonuclease PH (242 aa).

Residues Arg89 and 127-129 contribute to the phosphate site; that span reads GTR.

Belongs to the RNase PH family. In terms of assembly, homohexameric ring arranged as a trimer of dimers.

The catalysed reaction is tRNA(n+1) + phosphate = tRNA(n) + a ribonucleoside 5'-diphosphate. Its function is as follows. Phosphorolytic 3'-5' exoribonuclease that plays an important role in tRNA 3'-end maturation. Removes nucleotide residues following the 3'-CCA terminus of tRNAs; can also add nucleotides to the ends of RNA molecules by using nucleoside diphosphates as substrates, but this may not be physiologically important. Probably plays a role in initiation of 16S rRNA degradation (leading to ribosome degradation) during starvation. The chain is Ribonuclease PH from Neisseria gonorrhoeae (strain ATCC 700825 / FA 1090).